Here is a 570-residue protein sequence, read N- to C-terminus: 4-hydroxy-7-methoxy-3-oxo-3,4-dihydro-2H-1,4-benzoxazin-2-yl glucoside beta-D-glucosidase 1c, chloroplastic (570 aa).

The N-terminal 50 residues, 1-50 (MALLAAATLNPTTHLSIRSRAGHNSENLWLRSAASSQKSKGRFCNLTVRA), are a transit peptide targeting the chloroplast. Residues Gln92, His194, and 239–240 (NE) contribute to the a beta-D-glucoside site. Glu240 acts as the Proton donor in catalysis. Cys259 and Cys265 are disulfide-bonded. A beta-D-glucoside is bound by residues Tyr383, Glu456, Trp504, 511 to 512 (EW), and Phe520. Glu456 serves as the catalytic Nucleophile.

It belongs to the glycosyl hydrolase 1 family. In terms of assembly, homo- and heterohexamers. Expressed in young seedlings early after germination.

The protein localises to the plastid. Its subcellular location is the chloroplast. It catalyses the reaction Hydrolysis of terminal, non-reducing beta-D-glucosyl residues with release of beta-D-glucose.. The enzyme catalyses DIMBOA beta-D-glucoside + H2O = DIMBOA + D-glucose. It carries out the reaction DIBOA beta-D-glucoside + H2O = DIBOA + D-glucose. Its function is as follows. Acts in defense of young plant parts against pests via the production of hydroxamic acids from hydroxamic acid glucosides. Enzymatic activity is highly correlated with plant growth. The preferred substrate is DIMBOA-beta-D-glucoside. In Triticum aestivum (Wheat), this protein is 4-hydroxy-7-methoxy-3-oxo-3,4-dihydro-2H-1,4-benzoxazin-2-yl glucoside beta-D-glucosidase 1c, chloroplastic (GLU1C).